Reading from the N-terminus, the 913-residue chain is Tyrosine-protein phosphatase non-receptor type 3 (913 aa).

Residues 29-312 (VICSIRFLDG…EHHSFFQAKK (284 aa)) form the FERM domain. A phosphoserine mark is found at Ser357, Ser359, and Ser367. Disordered stretches follow at residues 364 to 400 (ETKSLPSRSPPITPNWRSPRLRHEIRKPRHSSADNLA) and 417 to 473 (KGPL…PDGV). Thr376 is subject to Phosphothreonine. Ser381 carries the post-translational modification Phosphoserine. Residues 382-393 (PRLRHEIRKPRH) show a composition bias toward basic residues. Ser425 is subject to Phosphoserine. The span at 441 to 453 (SENNPAQSCLTQK) shows a compositional bias: polar residues. Residues 454–470 (SSSSVSPSSNAPGSCSP) show a composition bias toward low complexity. The region spanning 510–582 (LIRITPDEEG…DQVVMFIKAS (73 aa)) is the PDZ domain. In terms of domain architecture, Tyrosine-protein phosphatase spans 646-901 (VLIQFEQLYR…KFVCEAILRV (256 aa)). Substrate contacts are provided by residues Asp811, 842–848 (CSAGIGR), and Gln886. Cys842 acts as the Phosphocysteine intermediate in catalysis.

The protein belongs to the protein-tyrosine phosphatase family. Non-receptor class subfamily.

It localises to the cell membrane. The protein resides in the cytoplasm. It is found in the cytoskeleton. It catalyses the reaction O-phospho-L-tyrosyl-[protein] + H2O = L-tyrosyl-[protein] + phosphate. May act at junctions between the membrane and the cytoskeleton. This is Tyrosine-protein phosphatase non-receptor type 3 (Ptpn3) from Mus musculus (Mouse).